Reading from the N-terminus, the 341-residue chain is NADH-quinone oxidoreductase subunit H 2 (341 aa).

The next 8 helical transmembrane spans lie at 13–33, 82–102, 115–135, 161–181, 190–210, 248–268, 277–297, and 317–337; these read IIVI…IAYI, GVFL…WAVI, VGVL…IMAG, IGFV…TAIV, MLGW…VSAL, YVAI…GWLP, WVPG…LFAM, and VFLP…QFAG.

Belongs to the complex I subunit 1 family. As to quaternary structure, NDH-1 is composed of 14 different subunits. Subunits NuoA, H, J, K, L, M, N constitute the membrane sector of the complex.

The protein resides in the cell inner membrane. It catalyses the reaction a quinone + NADH + 5 H(+)(in) = a quinol + NAD(+) + 4 H(+)(out). Functionally, NDH-1 shuttles electrons from NADH, via FMN and iron-sulfur (Fe-S) centers, to quinones in the respiratory chain. The immediate electron acceptor for the enzyme in this species is believed to be ubiquinone. Couples the redox reaction to proton translocation (for every two electrons transferred, four hydrogen ions are translocated across the cytoplasmic membrane), and thus conserves the redox energy in a proton gradient. This subunit may bind ubiquinone. In Rhodopseudomonas palustris (strain BisB5), this protein is NADH-quinone oxidoreductase subunit H 2.